The chain runs to 145 residues: D-aminoacyl-tRNA deacylase (145 aa).

The Gly-cisPro motif, important for rejection of L-amino acids motif lies at 137 to 138 (GP).

It belongs to the DTD family. In terms of assembly, homodimer.

The protein resides in the cytoplasm. It catalyses the reaction glycyl-tRNA(Ala) + H2O = tRNA(Ala) + glycine + H(+). The catalysed reaction is a D-aminoacyl-tRNA + H2O = a tRNA + a D-alpha-amino acid + H(+). In terms of biological role, an aminoacyl-tRNA editing enzyme that deacylates mischarged D-aminoacyl-tRNAs. Also deacylates mischarged glycyl-tRNA(Ala), protecting cells against glycine mischarging by AlaRS. Acts via tRNA-based rather than protein-based catalysis; rejects L-amino acids rather than detecting D-amino acids in the active site. By recycling D-aminoacyl-tRNA to D-amino acids and free tRNA molecules, this enzyme counteracts the toxicity associated with the formation of D-aminoacyl-tRNA entities in vivo and helps enforce protein L-homochirality. The sequence is that of D-aminoacyl-tRNA deacylase from Yersinia pestis bv. Antiqua (strain Antiqua).